A 387-amino-acid polypeptide reads, in one-letter code: Galactokinase (387 aa).

33–36 serves as a coordination point for substrate; it reads EHID. Residues serine 67 and 124-130 contribute to the ATP site; that span reads GAGLSSS. Mg(2+) contacts are provided by serine 130 and glutamate 162. Aspartate 174 functions as the Proton acceptor in the catalytic mechanism. Tyrosine 224 contacts substrate.

Belongs to the GHMP kinase family. GalK subfamily.

The protein resides in the cytoplasm. It catalyses the reaction alpha-D-galactose + ATP = alpha-D-galactose 1-phosphate + ADP + H(+). The protein operates within carbohydrate metabolism; galactose metabolism. Catalyzes the transfer of the gamma-phosphate of ATP to D-galactose to form alpha-D-galactose-1-phosphate (Gal-1-P). This chain is Galactokinase, found in Clostridium perfringens (strain 13 / Type A).